A 153-amino-acid polypeptide reads, in one-letter code: MVTAFLNERQATTEEMALVSNALAAYSFIADQPERAALYFVCGVCLGLVLTLIALVVQISCRTDCKTQQAPKKTGKTVENTSDTSDSDSDWDNTSDLSARRHRRFERTLGNVFTSAEELERAQRLEERERIIREIWMNGQPDMPGTRSLNRYY.

The chain crosses the membrane as a helical span at residues 37 to 57 (ALYFVCGVCLGLVLTLIALVV). Residues 66–97 (KTQQAPKKTGKTVENTSDTSDSDSDWDNTSDL) form a disordered region.

This sequence belongs to the EVA1 family.

It is found in the endoplasmic reticulum membrane. Its subcellular location is the lysosome membrane. Its function is as follows. Acts as a regulator of programmed cell death, mediating both autophagy and apoptosis. The chain is Protein eva-1 homolog A (Eva1a) from Danio rerio (Zebrafish).